A 98-amino-acid polypeptide reads, in one-letter code: N(2)-fixation sustaining protein CowN (98 aa).

It belongs to the CowN family.

Functionally, is required to sustain N(2)-dependent growth in the presence of low levels of carbon monoxide (CO). Probably acts by protecting the N(2) fixation ability of the nitrogenase complex, which is inactivated in the presence of CO. The sequence is that of N(2)-fixation sustaining protein CowN from Trichlorobacter lovleyi (strain ATCC BAA-1151 / DSM 17278 / SZ) (Geobacter lovleyi).